The primary structure comprises 296 residues: Enoyl-CoA hydratase ACTT3 (296 aa).

The short motif at 294 to 296 (PKL) is the Peroxisomal targeting signal type 1 element.

It belongs to the enoyl-CoA hydratase/isomerase family.

The protein resides in the peroxisome. It carries out the reaction a (3S)-3-hydroxyacyl-CoA = a (2E)-enoyl-CoA + H2O. The enzyme catalyses a 4-saturated-(3S)-3-hydroxyacyl-CoA = a (3E)-enoyl-CoA + H2O. It participates in mycotoxin biosynthesis. Functionally, enoyl-CoA hydratase; part of the gene clusters that mediate the biosynthesis of the host-selective toxins (HSTs) ACT-toxins responsible for brown spot of tangerine disease by the tangerine pathotype which affects tangerines and mandarins. ACT-toxins consist of three moieties, 9,10-epoxy-8-hydroxy-9-methyl-decatrienoic acid (EDA), valine and a polyketide. ACT-toxin I is toxic to both citrus and pear; toxin II the 5''-deoxy derivative of ACT-toxin I, is highly toxic to pear and slightly toxic to citrus. On cellular level, ACT-toxins affect plasma membrane of susceptible cells and cause a sudden increase in loss of K(+) after a few minutes of toxin treatment. The acyl-CoA ligase ACTT1, the hydrolase ACTT2, the enoyl-CoA hydratases ACTT3 and ACTT6, and the acyl-CoA synthetase ACTT5 are all involved in the biosynthesis of the AK-, AF- and ACT-toxin common 9,10-epoxy-8-hydroxy-9-methyl-decatrienoic acid (EDA) structural moiety. The exact role of each enzyme, and of additional enzymes identified within the AF-toxin clusters have still to be determined. On the other hand, ACTTS1 to ACTTS4 are specific to the tangerine pathotype. The function of ACTTS3 is to elongate the polyketide chain portion of ACT-toxin that is unique to this toxin. The enoyl-reductase ACTTS2 might complement the missing enoyl-reductase (ER) domain in ACTTS3 in the synthesis of the polyketide portion of ACT-toxin. The roles of the nonribosomal peptide synthetases-related proteins ACTTS1 and ACTTS4 have also still not been elucidated. The protein is Enoyl-CoA hydratase ACTT3 of Alternaria alternata (Alternaria rot fungus).